Consider the following 405-residue polypeptide: MVCRNVSRQQFRAIMIITSLLDTDLYKFSMMQVVLHHFPAAQVEYRYKCRTPGINLRPYLDEIRAEVHELCQLRFTSEELDYLRGLRFIKSDFVDFLGLFHLPERCIFIGEGEQPGEISITVKGPWLHTILFEIPVLAIVNEVYFRNTRRNPDWEEGRKRLQSKMNLVLDDPALADFRVAEYGTRRRFSKVWHEEIVSTMKARMGVHFAGTSNVLLAMRHGVLPLGTMGHEYLQACQALGPRLRDSQVFALEVWAKEYRGDLGIALSDVYGMDAFLRDFDMYFCKLFDGARHDSGDPFVWGERLLEHYRTNRADPRAKTLVFSDSLTFPRAIELARQFAGRCKVSFGIGTNLTNDLGHEPLQIVMKMVRCNGQPVAKVSDAPEKTMCDDPAYLAYLRQVFQLPPA.

Histidine 230 carries the phosphohistidine; by autocatalysis modification.

Belongs to the NAPRTase family. In terms of processing, transiently phosphorylated on a His residue during the reaction cycle. Phosphorylation strongly increases the affinity for substrates and increases the rate of nicotinate D-ribonucleotide production. Dephosphorylation regenerates the low-affinity form of the enzyme, leading to product release.

The catalysed reaction is nicotinate + 5-phospho-alpha-D-ribose 1-diphosphate + ATP + H2O = nicotinate beta-D-ribonucleotide + ADP + phosphate + diphosphate. Its pathway is cofactor biosynthesis; NAD(+) biosynthesis; nicotinate D-ribonucleotide from nicotinate: step 1/1. Catalyzes the synthesis of beta-nicotinate D-ribonucleotide from nicotinate and 5-phospho-D-ribose 1-phosphate at the expense of ATP. This Bordetella pertussis (strain Tohama I / ATCC BAA-589 / NCTC 13251) protein is Nicotinate phosphoribosyltransferase.